Here is a 170-residue protein sequence, read N- to C-terminus: Sec-independent protein translocase protein TATA, chloroplastic (170 aa).

Residues 1 to 61 constitute a chloroplast transit peptide; it reads MGIPVVVPVA…GGSGGDLAAV (61 aa). Residues 62 to 84 are Lumenal-facing; it reads AASVAARPRRAGSGGGGALGCKC. Residues 85 to 105 traverse the membrane as a helical segment; the sequence is LFGLGVPELAVIAGVAALVFG. At 106–170 the chain is on the stromal side; that stretch reads PKQLPEIGRS…LEASSSKESA (65 aa). The span at 130–139 shows a compositional bias: basic and acidic residues; the sequence is FETELKKEPG. The interval 130-170 is disordered; sequence FETELKKEPGEGGDQPPPATPTAVSGGEEKGLEASSSKESA.

It belongs to the TatA/E family. As to quaternary structure, in thylakoid membranes, TATC and TATB form a large receptor complex, containing about eight TATC-TATB pairs, which binds the precursor protein. Twin arginine signal peptide promotes pH-triggered docking of TATA oligomers to TATC-TATB receptor complex, inducing a conformational switch of TATA that results in activation of the translocase. TATA dissociates from TATC-TATB upon completion of translocation.

Its subcellular location is the plastid. It localises to the chloroplast thylakoid membrane. In terms of biological role, part of the twin-arginine translocation (Tat) system that transports large folded proteins containing a characteristic twin-arginine motif in their signal peptide across the thylakoid membrane. Involved in delta pH-dependent protein transport required for chloroplast development, especially thylakoid membrane formation. TATC and TATB mediate precursor recognition, whereas TATA facilitates translocation. In Zea mays (Maize), this protein is Sec-independent protein translocase protein TATA, chloroplastic.